Consider the following 215-residue polypeptide: N-(5'-phosphoribosyl)anthranilate isomerase (215 aa).

The protein belongs to the TrpF family.

The enzyme catalyses N-(5-phospho-beta-D-ribosyl)anthranilate = 1-(2-carboxyphenylamino)-1-deoxy-D-ribulose 5-phosphate. The protein operates within amino-acid biosynthesis; L-tryptophan biosynthesis; L-tryptophan from chorismate: step 3/5. This Rippkaea orientalis (strain PCC 8801 / RF-1) (Cyanothece sp. (strain PCC 8801)) protein is N-(5'-phosphoribosyl)anthranilate isomerase.